The primary structure comprises 555 residues: 2-succinyl-5-enolpyruvyl-6-hydroxy-3-cyclohexene-1-carboxylate synthase (555 aa).

It belongs to the TPP enzyme family. MenD subfamily. In terms of assembly, homodimer. Mg(2+) serves as cofactor. It depends on Mn(2+) as a cofactor. Thiamine diphosphate is required as a cofactor.

It catalyses the reaction isochorismate + 2-oxoglutarate + H(+) = 5-enolpyruvoyl-6-hydroxy-2-succinyl-cyclohex-3-ene-1-carboxylate + CO2. It functions in the pathway quinol/quinone metabolism; 1,4-dihydroxy-2-naphthoate biosynthesis; 1,4-dihydroxy-2-naphthoate from chorismate: step 2/7. Its pathway is quinol/quinone metabolism; menaquinone biosynthesis. Catalyzes the thiamine diphosphate-dependent decarboxylation of 2-oxoglutarate and the subsequent addition of the resulting succinic semialdehyde-thiamine pyrophosphate anion to isochorismate to yield 2-succinyl-5-enolpyruvyl-6-hydroxy-3-cyclohexene-1-carboxylate (SEPHCHC). The protein is 2-succinyl-5-enolpyruvyl-6-hydroxy-3-cyclohexene-1-carboxylate synthase of Kineococcus radiotolerans (strain ATCC BAA-149 / DSM 14245 / SRS30216).